The following is a 63-amino-acid chain: MKANELREKSVEQLNEQLLGLLRDQFNLRMQKATGQLGQSHLLSQVKRDIARVKTVLNQQAGK.

The protein belongs to the universal ribosomal protein uL29 family.

The protein is Large ribosomal subunit protein uL29 of Pseudomonas aeruginosa (strain UCBPP-PA14).